The chain runs to 444 residues: Ribosome biogenesis protein YTM1 (444 aa).

The ubiquitin-like (UBL) domain stretch occupies residues 8-89 (VKLRFFTREE…ETFLNVEYTR (82 aa)). WD repeat units lie at residues 99-138 (SFDNEDWVSSLDVGSNYIYSGSYDGIVRTYNLSGKVEKQY), 140-178 (GHSGPIRAVHYISSTRLVSAGNDRTLRLWKTKNDDLKSI), 194-231 (GHKAPVVSIDVSKDRILSASCDNTVSLWSTNYKEMTVI), 269-309 (SHSA…CVDT), 311-350 (TTSYSLLSVAQLPKLNLLACGSSARHITLHDPRVNSSSKI), 357-397 (GHKN…AMYT), and 408-444 (GVNDKVFAVKWAKGVGIISGGQDKKIQINKGDNIFSN). The tract at residues 99–444 (SFDNEDWVSS…INKGDNIFSN (346 aa)) is sufficient for interaction with ERB1 and association with 66S pre-ribosomes.

Belongs to the WD repeat WDR12/YTM1 family. Component of the NOP7 complex, composed of ERB1, NOP7 and YTM1. The complex is held together by ERB1, which interacts with NOP7 via its N-terminal domain and with YTM1 via a high-affinity interaction between the seven-bladed beta-propeller domains of the 2 proteins. The NOP7 complex associates with the 66S pre-ribosome. Interacts (via UBL domain) with MDN1 (via VWFA/MIDAS domain).

Its subcellular location is the nucleus. It localises to the nucleolus. The protein resides in the nucleoplasm. Component of the NOP7 complex, which is required for maturation of the 25S and 5.8S ribosomal RNAs and formation of the 60S ribosome. The protein is Ribosome biogenesis protein YTM1 of Kluyveromyces lactis (strain ATCC 8585 / CBS 2359 / DSM 70799 / NBRC 1267 / NRRL Y-1140 / WM37) (Yeast).